Reading from the N-terminus, the 147-residue chain is D-aminoacyl-tRNA deacylase (147 aa).

Positions 136–137 match the Gly-cisPro motif, important for rejection of L-amino acids motif; it reads GP.

It belongs to the DTD family. In terms of assembly, homodimer.

The protein localises to the cytoplasm. It carries out the reaction glycyl-tRNA(Ala) + H2O = tRNA(Ala) + glycine + H(+). The enzyme catalyses a D-aminoacyl-tRNA + H2O = a tRNA + a D-alpha-amino acid + H(+). Its function is as follows. An aminoacyl-tRNA editing enzyme that deacylates mischarged D-aminoacyl-tRNAs. Also deacylates mischarged glycyl-tRNA(Ala), protecting cells against glycine mischarging by AlaRS. Acts via tRNA-based rather than protein-based catalysis; rejects L-amino acids rather than detecting D-amino acids in the active site. By recycling D-aminoacyl-tRNA to D-amino acids and free tRNA molecules, this enzyme counteracts the toxicity associated with the formation of D-aminoacyl-tRNA entities in vivo and helps enforce protein L-homochirality. The protein is D-aminoacyl-tRNA deacylase of Streptococcus sanguinis (strain SK36).